The following is a 135-amino-acid chain: Ribonuclease P protein component (135 aa).

Belongs to the RnpA family. Consists of a catalytic RNA component (M1 or rnpB) and a protein subunit.

It carries out the reaction Endonucleolytic cleavage of RNA, removing 5'-extranucleotides from tRNA precursor.. Its function is as follows. RNaseP catalyzes the removal of the 5'-leader sequence from pre-tRNA to produce the mature 5'-terminus. It can also cleave other RNA substrates such as 4.5S RNA. The protein component plays an auxiliary but essential role in vivo by binding to the 5'-leader sequence and broadening the substrate specificity of the ribozyme. The chain is Ribonuclease P protein component from Pseudomonas aeruginosa (strain ATCC 15692 / DSM 22644 / CIP 104116 / JCM 14847 / LMG 12228 / 1C / PRS 101 / PAO1).